A 545-amino-acid polypeptide reads, in one-letter code: Thermosome subunit alpha (545 aa).

Residues 522-545 are disordered; sequence KKSTPPSGQGGQGQGMPGGGMPEY. Residues 529–545 show a composition bias toward gly residues; the sequence is GQGGQGQGMPGGGMPEY.

Belongs to the TCP-1 chaperonin family. Forms a Heterooligomeric complex of two stacked eight-membered rings. In terms of processing, the N-terminus is blocked.

Functionally, molecular chaperone; binds unfolded polypeptides in vitro, and has a weak ATPase activity. The chain is Thermosome subunit alpha (thsA) from Thermoplasma acidophilum (strain ATCC 25905 / DSM 1728 / JCM 9062 / NBRC 15155 / AMRC-C165).